The sequence spans 162 residues: MAIKKLVPASHPILTKKAQAVIKFDDSLKRLLQDLEDTMYAQEAAGLCAPQINQSLQVAIIDMEMEGLLQLVNPKIISQSNETITDLEGSITLPDVYGEVTRSKMIVVESYDVNGNKVELTAHEDVARMILHIIDQMNGIPFTERADRILTDKEVEAYFIND.

This sequence belongs to the polypeptide deformylase family.

In Staphylococcus aureus (strain MRSA252), this protein is Peptide deformylase-like.